Consider the following 214-residue polypeptide: Cytochrome b (214 aa).

4 helical membrane-spanning segments follow: residues Phe-31–Phe-51, Trp-75–Ile-96, Trp-111–Leu-131, and Phe-176–Leu-196. His-81 and His-95 together coordinate heme b. Heme b-binding residues include His-180 and His-194. Residue His-199 coordinates a ubiquinone.

This sequence belongs to the cytochrome b family. As to quaternary structure, the cytochrome bc1 complex contains 3 respiratory subunits (MT-CYB, CYC1 and UQCRFS1), 2 core proteins (UQCRC1 and UQCRC2) and probably 6 low-molecular weight proteins. Heme b serves as cofactor.

It is found in the mitochondrion inner membrane. Component of the ubiquinol-cytochrome c reductase complex (complex III or cytochrome b-c1 complex) that is part of the mitochondrial respiratory chain. The b-c1 complex mediates electron transfer from ubiquinol to cytochrome c. Contributes to the generation of a proton gradient across the mitochondrial membrane that is then used for ATP synthesis. The polypeptide is Cytochrome b (MT-CYB) (Gloydius blomhoffii (Mamushi)).